Reading from the N-terminus, the 329-residue chain is MVKTQRVVITPGEPAGIGPDLVVQLAQREWPVELVVCADATLLIDRAAMLGLPLTLRPYSPNSPAQPQTTGTLTLLPVALRESVTAGQLAIENGHYVVETLARACDGCLNGEFAALITGPVHKGVINDAGIPFTGHTEFFEERSQAKKVVMMLATEELRVALATTHLPLRDIADAITPALLHEVIAILHHDLRTKFGIAEPRILVCGLNPHAGEGGHMGTEEIDTIIPVLDELRAQGMKLNGPLPADTLFQPKYLDNADAVLAMYHDQGLPVLKYQGFGRGVNITLGLPFIRTSVDHGTALELAGRGKADVGSFITALNLAIKMIVNTQ.

Substrate contacts are provided by H136 and T137. A divalent metal cation is bound by residues H166, H211, and H266. Residues K274, N283, and R292 each coordinate substrate.

This sequence belongs to the PdxA family. As to quaternary structure, homodimer. Zn(2+) is required as a cofactor. Requires Mg(2+) as cofactor. The cofactor is Co(2+).

It localises to the cytoplasm. It catalyses the reaction 4-(phosphooxy)-L-threonine + NAD(+) = 3-amino-2-oxopropyl phosphate + CO2 + NADH. The protein operates within cofactor biosynthesis; pyridoxine 5'-phosphate biosynthesis; pyridoxine 5'-phosphate from D-erythrose 4-phosphate: step 4/5. In terms of biological role, catalyzes the NAD(P)-dependent oxidation of 4-(phosphooxy)-L-threonine (HTP) into 2-amino-3-oxo-4-(phosphooxy)butyric acid which spontaneously decarboxylates to form 3-amino-2-oxopropyl phosphate (AHAP). In Escherichia coli (strain 55989 / EAEC), this protein is 4-hydroxythreonine-4-phosphate dehydrogenase.